Reading from the N-terminus, the 89-residue chain is Small ribosomal subunit protein uS14A (89 aa).

It belongs to the universal ribosomal protein uS14 family. Part of the 30S ribosomal subunit. Contacts proteins S3 and S10.

Its function is as follows. Binds 16S rRNA, required for the assembly of 30S particles and may also be responsible for determining the conformation of the 16S rRNA at the A site. This is Small ribosomal subunit protein uS14A from Ligilactobacillus salivarius (strain UCC118) (Lactobacillus salivarius).